The sequence spans 430 residues: Adenylosuccinate synthetase (430 aa).

Residues 12 to 18 and 40 to 42 contribute to the GTP site; these read GDEGKGK and GHT. The Proton acceptor role is filled by aspartate 13. Mg(2+) contacts are provided by aspartate 13 and glycine 40. IMP contacts are provided by residues 13–16, 38–41, threonine 128, arginine 142, glutamine 223, threonine 238, and arginine 302; these read DEGK and NAGH. Histidine 41 functions as the Proton donor in the catalytic mechanism. Position 298 to 304 (298 to 304) interacts with substrate; the sequence is TTTGRPR. GTP contacts are provided by residues arginine 304, 330–332, and 412–414; these read SID and SVG.

Belongs to the adenylosuccinate synthetase family. In terms of assembly, homodimer. Requires Mg(2+) as cofactor.

It localises to the cytoplasm. It catalyses the reaction IMP + L-aspartate + GTP = N(6)-(1,2-dicarboxyethyl)-AMP + GDP + phosphate + 2 H(+). Its pathway is purine metabolism; AMP biosynthesis via de novo pathway; AMP from IMP: step 1/2. Its function is as follows. Plays an important role in the de novo pathway of purine nucleotide biosynthesis. Catalyzes the first committed step in the biosynthesis of AMP from IMP. The protein is Adenylosuccinate synthetase of Streptococcus pyogenes serotype M6 (strain ATCC BAA-946 / MGAS10394).